We begin with the raw amino-acid sequence, 198 residues long: Large ribosomal subunit protein eL18 (198 aa).

The disordered stretch occupies residues 157–198 (RHFGASGVPGSHSKPYATNRGKETKRGRRTGRSYKRKAFRHV). Positions 179-198 (ETKRGRRTGRSYKRKAFRHV) are enriched in basic residues.

It belongs to the eukaryotic ribosomal protein eL18 family.

The protein localises to the cytoplasm. This chain is Large ribosomal subunit protein eL18 (RPL18-A), found in Leishmania major.